Here is a 486-residue protein sequence, read N- to C-terminus: UDP-N-acetylmuramoyl-L-alanyl-D-glutamate--2,6-diaminopimelate ligase (486 aa).

S26 contributes to the UDP-N-acetyl-alpha-D-muramoyl-L-alanyl-D-glutamate binding site. Residue 104–110 (GTNGKTS) participates in ATP binding. UDP-N-acetyl-alpha-D-muramoyl-L-alanyl-D-glutamate-binding positions include 152–153 (TT), S179, Q185, and R187. K219 carries the post-translational modification N6-carboxylysine. Residues R383, 407-410 (DNPR), G455, and E459 contribute to the meso-2,6-diaminopimelate site. The Meso-diaminopimelate recognition motif signature appears at 407–410 (DNPR).

Belongs to the MurCDEF family. MurE subfamily. The cofactor is Mg(2+). In terms of processing, carboxylation is probably crucial for Mg(2+) binding and, consequently, for the gamma-phosphate positioning of ATP.

It localises to the cytoplasm. It carries out the reaction UDP-N-acetyl-alpha-D-muramoyl-L-alanyl-D-glutamate + meso-2,6-diaminopimelate + ATP = UDP-N-acetyl-alpha-D-muramoyl-L-alanyl-gamma-D-glutamyl-meso-2,6-diaminopimelate + ADP + phosphate + H(+). It participates in cell wall biogenesis; peptidoglycan biosynthesis. In terms of biological role, catalyzes the addition of meso-diaminopimelic acid to the nucleotide precursor UDP-N-acetylmuramoyl-L-alanyl-D-glutamate (UMAG) in the biosynthesis of bacterial cell-wall peptidoglycan. The polypeptide is UDP-N-acetylmuramoyl-L-alanyl-D-glutamate--2,6-diaminopimelate ligase (Caulobacter vibrioides (strain ATCC 19089 / CIP 103742 / CB 15) (Caulobacter crescentus)).